A 362-amino-acid chain; its full sequence is Cobalt-precorrin-5B C(1)-methyltransferase (362 aa).

It belongs to the CbiD family.

The catalysed reaction is Co-precorrin-5B + S-adenosyl-L-methionine = Co-precorrin-6A + S-adenosyl-L-homocysteine. It participates in cofactor biosynthesis; adenosylcobalamin biosynthesis; cob(II)yrinate a,c-diamide from sirohydrochlorin (anaerobic route): step 6/10. Functionally, catalyzes the methylation of C-1 in cobalt-precorrin-5B to form cobalt-precorrin-6A. The chain is Cobalt-precorrin-5B C(1)-methyltransferase from Desulfotalea psychrophila (strain LSv54 / DSM 12343).